Here is a 118-residue protein sequence, read N- to C-terminus: Large ribosomal subunit protein bL20 (118 aa).

This sequence belongs to the bacterial ribosomal protein bL20 family.

In terms of biological role, binds directly to 23S ribosomal RNA and is necessary for the in vitro assembly process of the 50S ribosomal subunit. It is not involved in the protein synthesizing functions of that subunit. This is Large ribosomal subunit protein bL20 from Hydrogenovibrio crunogenus (strain DSM 25203 / XCL-2) (Thiomicrospira crunogena).